Reading from the N-terminus, the 481-residue chain is MTFRFDNSYARDLEGFYVDWPAAPVPAPRLLRLNRPLAEELGLDPDLLEREGAEIFSGRRLPEGAHPLAQAYAGHQFGGFSPQLGDGRALLIGEITDRAGRRRDLQLKGSGRTPFSRGADGKAALGPVLREYLVGEAMHGLGIPTTRALAAVATGEPLLRQEGERPGAILTRVAASHIRVGTFQFFAARSDIDRVRRLADYAIARHYPELASAPEPYLAFYEAVAEAQAQLVARWMLVGFIHGVMNTDNMTISGETIDYGPCAFMEGYDPGTVFSSIDLQGRYAYGNQPYILAWNLARLGEALLPLLDADAERATDKANSVLETVGARYQGHWLAGMRAKLGLAGAEEGDARLAEDLLEAMRNQRADWTLTFRRLAEAVTDEGTLRPLFRDPAALEAWLPRWRARLAPDAAERMRATNPIYIARNHRVEEALAAAHAGDLAPFDRLLEALADPFTERADRELFALPAPEGFDDSYRTFCGT.

ATP contacts are provided by G85, G87, R88, K108, D120, G121, R172, and R179. D248 (proton acceptor) is an active-site residue. Mg(2+)-binding residues include N249 and D258. D258 provides a ligand contact to ATP.

This sequence belongs to the SELO family. Requires Mg(2+) as cofactor. The cofactor is Mn(2+).

The catalysed reaction is L-seryl-[protein] + ATP = 3-O-(5'-adenylyl)-L-seryl-[protein] + diphosphate. The enzyme catalyses L-threonyl-[protein] + ATP = 3-O-(5'-adenylyl)-L-threonyl-[protein] + diphosphate. It carries out the reaction L-tyrosyl-[protein] + ATP = O-(5'-adenylyl)-L-tyrosyl-[protein] + diphosphate. It catalyses the reaction L-histidyl-[protein] + UTP = N(tele)-(5'-uridylyl)-L-histidyl-[protein] + diphosphate. The catalysed reaction is L-seryl-[protein] + UTP = O-(5'-uridylyl)-L-seryl-[protein] + diphosphate. The enzyme catalyses L-tyrosyl-[protein] + UTP = O-(5'-uridylyl)-L-tyrosyl-[protein] + diphosphate. Functionally, nucleotidyltransferase involved in the post-translational modification of proteins. It can catalyze the addition of adenosine monophosphate (AMP) or uridine monophosphate (UMP) to a protein, resulting in modifications known as AMPylation and UMPylation. The chain is Protein nucleotidyltransferase YdiU from Cereibacter sphaeroides (strain KD131 / KCTC 12085) (Rhodobacter sphaeroides).